Here is a 161-residue protein sequence, read N- to C-terminus: Nucleotide-binding protein Bphyt_3208 (161 aa).

The protein belongs to the YajQ family.

In terms of biological role, nucleotide-binding protein. The chain is Nucleotide-binding protein Bphyt_3208 from Paraburkholderia phytofirmans (strain DSM 17436 / LMG 22146 / PsJN) (Burkholderia phytofirmans).